The primary structure comprises 95 residues: MILYAKVSSVENGYKYDQEAAKALIDDYGILTCFEVEKVYIDRSSSQVKLVKEDRKFNTVNFDFFIETEKGPLEYDIFKNPLGLECIVNTYHHKW.

This is an uncharacterized protein from Enterobacteria phage T4 (Bacteriophage T4).